Here is a 313-residue protein sequence, read N- to C-terminus: Nucleoside diphosphate-linked moiety X motif 6 (313 aa).

Residues 138–270 (THQVGVAGAV…TSRVARLLLY (133 aa)) enclose the Nudix hydrolase domain.

Belongs to the Nudix hydrolase family. Monomer and homodimer.

The protein resides in the cytoplasm. It localises to the nucleus. Its subcellular location is the mitochondrion. In terms of biological role, may contribute to the regulation of cell proliferation. The sequence is that of Nucleoside diphosphate-linked moiety X motif 6 (Nudt6) from Mus musculus (Mouse).